The chain runs to 500 residues: Glucose-6-phosphate isomerase (500 aa).

Glu332 serves as the catalytic Proton donor. Catalysis depends on residues His363 and Lys473.

The protein belongs to the GPI family.

It is found in the cytoplasm. The catalysed reaction is alpha-D-glucose 6-phosphate = beta-D-fructose 6-phosphate. The protein operates within carbohydrate biosynthesis; gluconeogenesis. Its pathway is carbohydrate degradation; glycolysis; D-glyceraldehyde 3-phosphate and glycerone phosphate from D-glucose: step 2/4. Catalyzes the reversible isomerization of glucose-6-phosphate to fructose-6-phosphate. This Rhizorhabdus wittichii (strain DSM 6014 / CCUG 31198 / JCM 15750 / NBRC 105917 / EY 4224 / RW1) (Sphingomonas wittichii) protein is Glucose-6-phosphate isomerase.